Here is a 527-residue protein sequence, read N- to C-terminus: T-complex protein 1 subunit beta (527 aa).

This sequence belongs to the TCP-1 chaperonin family. Heterooligomeric complex of about 850 to 900 kDa that forms two stacked rings, 12 to 16 nm in diameter.

It localises to the cytoplasm. Its function is as follows. Molecular chaperone; assists the folding of proteins upon ATP hydrolysis. Known to play a role, in vitro, in the folding of actin and tubulin. This chain is T-complex protein 1 subunit beta, found in Arabidopsis thaliana (Mouse-ear cress).